Here is a 553-residue protein sequence, read N- to C-terminus: MSDIALTVSVLALVAVVGLWIGNIKVRGVGFGIGGVLFGGIIVGHFVDQAGVTLSGDMLHFIQEFGLILFVYTIGIQVGPGFFASLRVSGLRLNLFAVLIVIMGGLVTAILHKIFAIPLPVVLGIFSGAVTNTPALGAGQQILRDLGTPVDLVDQMGMSYAMAYPFGICGILLTMWLMRLIFRVNVEAEAQKHESSLANGHSLIQTMNIRVENPNLNNMAIQDVPILNSDKIICSRLKRDDTLMVPSPGTIIQAGDLLHLVGQPTDLHNAQLVIGKEVDTSLSTRGTDLRVERVVVTNEKVLGKRIRDLHFKERYDVVISRLNRAGVELVASSDASLQFGDILNLVGRPASIDAVANVVGNAQQKLQQVQMLPVFIGIGLGVLLGSIPLFVPGFPVALKLGLAGGPLIMALILGRIGSIGKLYWFMPPSANLALRELGIVLFLAVVGLKSGGDFVDTLTQGEGLSWIGYGIFITAIPLITVGLLARIFAKMNYLTLCGMLAGSMTDPPALAFANNLHATSGAAALSYATVYPLVMFLRIITPQLLAVIFWGMG.

The next 5 helical transmembrane spans lie at 4 to 24, 28 to 48, 65 to 85, 95 to 115, and 158 to 178; these read IALTVSVLALVAVVGLWIGNI, GVGFGIGGVLFGGIIVGHFVD, FGLILFVYTIGIQVGPGFFAS, LFAVLIVIMGGLVTAILHKIF, and MSYAMAYPFGICGILLTMWLM. RCK C-terminal domains lie at 192-276 and 279-361; these read KHES…VIGK and DTSL…VVGN. Helical transmembrane passes span 371–391, 393–413, 437–457, 464–484, 493–513, and 533–553; these read MLPVFIGIGLGVLLGSIPLFV, GFPVALKLGLAGGPLIMALIL, LGIVLFLAVVGLKSGGDFVDT, LSWIGYGIFITAIPLITVGLL, YLTLCGMLAGSMTDPPALAFA, and LVMFLRIITPQLLAVIFWGMG.

Belongs to the AAE transporter (TC 2.A.81) family. YidE subfamily.

It is found in the cell membrane. The chain is Putative transport protein YidE from Salmonella heidelberg (strain SL476).